The sequence spans 411 residues: Intracellular hyaluronan-binding protein 4 (411 aa).

Phosphoserine is present on residues S7 and S36. A coiled-coil region spans residues L42 to A62. Residues L42–S271 are disordered. The residue at position 70 (R70) is an Omega-N-methylarginine. S74 is modified (phosphoserine). Positions G87–S97 are enriched in basic and acidic residues. The residue at position 108 (S108) is a Phosphoserine. 2 stretches are compositionally biased toward basic and acidic residues: residues V138 to L181 and D205 to D229. Residues K212 and K274 each participate in a glycyl lysine isopeptide (Lys-Gly) (interchain with G-Cter in SUMO1); alternate cross-link. Residues K212 and K274 each participate in a glycyl lysine isopeptide (Lys-Gly) (interchain with G-Cter in SUMO2); alternate cross-link. Residues E279–T301 are a coiled coil. Positions N296 to E313 are enriched in basic and acidic residues. Residues N296 to S318 are disordered. K334 is covalently cross-linked (Glycyl lysine isopeptide (Lys-Gly) (interchain with G-Cter in SUMO1); alternate). Residue K334 forms a Glycyl lysine isopeptide (Lys-Gly) (interchain with G-Cter in SUMO2); alternate linkage. 2 positions are modified to phosphothreonine; by PKC: T352 and T373. The disordered stretch occupies residues N358–A411. The segment covering D402–A411 has biased composition (acidic residues).

The protein belongs to the SERBP1-HABP4 family. In terms of assembly, associates with ribosomes; promoting ribosome stabilization. Interacts with EEF2/eEF2; promoting ribosome stabilization. Interacts with FMR1. Interacts with FXR1 and FXR2. Interacts with CHD3 (via C-terminus). Interacts (via C-terminus) with RACK1. Interacts with p53/TP53. Interacts (via N-terminus) with SRSF9; this interaction is direct. Interacts with SYNCRIP; this interaction is direct. Interacts with MEF2C (via N-terminus); this interaction decreases DNA-binding activity of MEF2C in myocardial cells in response to mechanical stress. Interacts with PRMT1 (via N-terminus). Interacts with SPIN1. Phosphorylated by phorbol 12-myristate 13-acetate (PMA)-activated PKC isoforms at Thr-352 and Thr-373. Post-translationally, methylated. Methylation is decreased by phorbol 12-myristate 13-acetate (PMA)-activated PKC, in vitro. Expressed in adult heart, brain, liver, kidney, testis, and in various embryonic tissues, but not in adult spleen, lung or skeletal muscle.

The protein localises to the nucleus. The protein resides in the cytoplasm. Its subcellular location is the stress granule. It localises to the sarcoplasm. It is found in the nuclear body. The protein localises to the nucleolus. The protein resides in the nucleus speckle. Its subcellular location is the cajal body. It localises to the gem. Functionally, ribosome-binding protein that promotes ribosome hibernation, a process during which ribosomes are stabilized in an inactive state and preserved from proteasomal degradation. Acts via its association with EEF2/eEF2 factor at the A-site of the ribosome, promoting ribosome stabilization in an inactive state compatible with storage. Plays a key role in ribosome hibernation in the mature oocyte by promoting ribosome stabilization. Ribosomes, which are produced in large quantities during oogenesis, are stored and translationally repressed in the oocyte and early embryo. Also binds RNA, regulating transcription and pre-mRNA splicing. Binds (via C-terminus) to poly(U) RNA. Seems to play a role in PML-nuclear bodies formation. Negatively regulates DNA-binding activity of the transcription factor MEF2C in myocardial cells in response to mechanical stress. The sequence is that of Intracellular hyaluronan-binding protein 4 from Mus musculus (Mouse).